The following is a 226-amino-acid chain: Cytidylate kinase (226 aa).

ATP is bound at residue 11 to 19 (GPAGAGKST).

The protein belongs to the cytidylate kinase family. Type 1 subfamily.

It localises to the cytoplasm. It catalyses the reaction CMP + ATP = CDP + ADP. The catalysed reaction is dCMP + ATP = dCDP + ADP. This is Cytidylate kinase from Pelotomaculum thermopropionicum (strain DSM 13744 / JCM 10971 / SI).